Consider the following 103-residue polypeptide: Large ribosomal subunit protein bL21 (103 aa).

The protein belongs to the bacterial ribosomal protein bL21 family. As to quaternary structure, part of the 50S ribosomal subunit. Contacts protein L20.

Its function is as follows. This protein binds to 23S rRNA in the presence of protein L20. This is Large ribosomal subunit protein bL21 from Leptothrix cholodnii (strain ATCC 51168 / LMG 8142 / SP-6) (Leptothrix discophora (strain SP-6)).